Reading from the N-terminus, the 578-residue chain is Proline--tRNA ligase (578 aa).

Belongs to the class-II aminoacyl-tRNA synthetase family. ProS type 1 subfamily. Homodimer.

The protein resides in the cytoplasm. The catalysed reaction is tRNA(Pro) + L-proline + ATP = L-prolyl-tRNA(Pro) + AMP + diphosphate. In terms of biological role, catalyzes the attachment of proline to tRNA(Pro) in a two-step reaction: proline is first activated by ATP to form Pro-AMP and then transferred to the acceptor end of tRNA(Pro). As ProRS can inadvertently accommodate and process non-cognate amino acids such as alanine and cysteine, to avoid such errors it has two additional distinct editing activities against alanine. One activity is designated as 'pretransfer' editing and involves the tRNA(Pro)-independent hydrolysis of activated Ala-AMP. The other activity is designated 'posttransfer' editing and involves deacylation of mischarged Ala-tRNA(Pro). The misacylated Cys-tRNA(Pro) is not edited by ProRS. This is Proline--tRNA ligase from Paraburkholderia xenovorans (strain LB400).